A 318-amino-acid polypeptide reads, in one-letter code: UDP-N-acetylenolpyruvoylglucosamine reductase (318 aa).

The FAD-binding PCMH-type domain occupies I38–G204. R182 is a catalytic residue. Residues S212–K229 show a composition bias toward basic and acidic residues. The tract at residues S212–G232 is disordered. The active-site Proton donor is the S233. Residue E310 is part of the active site.

This sequence belongs to the MurB family. FAD serves as cofactor.

The protein resides in the cytoplasm. The enzyme catalyses UDP-N-acetyl-alpha-D-muramate + NADP(+) = UDP-N-acetyl-3-O-(1-carboxyvinyl)-alpha-D-glucosamine + NADPH + H(+). It functions in the pathway cell wall biogenesis; peptidoglycan biosynthesis. In terms of biological role, cell wall formation. The sequence is that of UDP-N-acetylenolpyruvoylglucosamine reductase from Leptospira interrogans serogroup Icterohaemorrhagiae serovar copenhageni (strain Fiocruz L1-130).